The chain runs to 65 residues: MDDILVTSDLTSRYKISRKTLWSWQSADTMPRGFVCPFPPPDWPGNPNRWRSESIKEWEDKKKIN.

The disordered stretch occupies residues 45-65 (GNPNRWRSESIKEWEDKKKIN). Over residues 50–65 (WRSESIKEWEDKKKIN) the composition is skewed to basic and acidic residues.

In terms of biological role, excisionase and integrase are necessary for the excision of prophage from the host genome by site-specific recombination at the att site. The polypeptide is Excisionase (xis) (Escherichia coli (Bacteriophage phi-80)).